The following is a 304-amino-acid chain: Cell surface-binding protein OPG105 (304 aa).

The Alpha-carbonic anhydrase domain occupies 1 to 235 (MPQQLSPINI…NDDTQVYYSG (235 aa)). The Virion surface portion of the chain corresponds to 1–275 (MPQQLSPINI…YQKYIEGNKT (275 aa)). A helical transmembrane segment spans residues 276–294 (FAIIAIVFVFILTAILFLM). The Intravirion segment spans residues 295–304 (SRRYSREKQN).

Belongs to the alpha-carbonic anhydrase family. Homodimer; disulfide-linked. Post-translationally, apparently non-glycosylated.

It is found in the virion membrane. Its function is as follows. Binds to chondroitin sulfate on the cell surface to provide virion attachment to target cell. In Rabbitpox virus (strain Utrecht) (RPV), this protein is Cell surface-binding protein OPG105 (OPG105).